Reading from the N-terminus, the 131-residue chain is Small ribosomal subunit protein bS6 (131 aa).

The segment at 98–131 is disordered; that stretch reads EASPMVKAKDERRERREDFANETADDSEAGDSEE. Residues 104–116 are compositionally biased toward basic and acidic residues; that stretch reads KAKDERRERREDF. The segment covering 120–131 has biased composition (acidic residues); sequence TADDSEAGDSEE.

The protein belongs to the bacterial ribosomal protein bS6 family.

Binds together with bS18 to 16S ribosomal RNA. In Klebsiella pneumoniae (strain 342), this protein is Small ribosomal subunit protein bS6.